The chain runs to 489 residues: Putative general secretion pathway protein A (489 aa).

26-33 is an ATP binding site; that stretch reads GEAGSGKT. The chain crosses the membrane as a helical span at residues 237–257; that stretch reads MQLAVVMSGTIIALTCGWLLL.

The protein belongs to the ExeA family.

The protein localises to the cell membrane. May play a regulatory role under conditions of derepressed gsp gene expression. This is Putative general secretion pathway protein A (gspA) from Escherichia coli (strain K12).